Here is a 360-residue protein sequence, read N- to C-terminus: GTP 3',8-cyclase 2 (360 aa).

The Radical SAM core domain occupies 33–259 (TFGRVANDLR…PDPAPRGSAP (227 aa)). Arg-42 lines the GTP pocket. Residues Cys-49 and Cys-53 each coordinate [4Fe-4S] cluster. Tyr-55 is an S-adenosyl-L-methionine binding site. Cys-56 contacts [4Fe-4S] cluster. Arg-93 is a GTP binding site. Gly-97 contacts S-adenosyl-L-methionine. Thr-124 contacts GTP. Ser-148 contacts S-adenosyl-L-methionine. Lys-185 is a binding site for GTP. Met-219 lines the S-adenosyl-L-methionine pocket. Residues Cys-287 and Cys-290 each contribute to the [4Fe-4S] cluster site. Residue 292–294 (RTR) coordinates GTP. Position 304 (Cys-304) interacts with [4Fe-4S] cluster.

It belongs to the radical SAM superfamily. MoaA family. As to quaternary structure, monomer and homodimer. It depends on [4Fe-4S] cluster as a cofactor.

The enzyme catalyses GTP + AH2 + S-adenosyl-L-methionine = (8S)-3',8-cyclo-7,8-dihydroguanosine 5'-triphosphate + 5'-deoxyadenosine + L-methionine + A + H(+). Its pathway is cofactor biosynthesis; molybdopterin biosynthesis. Functionally, catalyzes the cyclization of GTP to (8S)-3',8-cyclo-7,8-dihydroguanosine 5'-triphosphate. This chain is GTP 3',8-cyclase 2, found in Mycobacterium bovis (strain ATCC BAA-935 / AF2122/97).